The following is a 141-amino-acid chain: Nucleoside diphosphate kinase (141 aa).

Lysine 11, phenylalanine 59, arginine 87, threonine 93, arginine 104, and asparagine 114 together coordinate ATP. The active-site Pros-phosphohistidine intermediate is the histidine 117.

It belongs to the NDK family. In terms of assembly, homotetramer. It depends on Mg(2+) as a cofactor.

It is found in the cytoplasm. The catalysed reaction is a 2'-deoxyribonucleoside 5'-diphosphate + ATP = a 2'-deoxyribonucleoside 5'-triphosphate + ADP. It carries out the reaction a ribonucleoside 5'-diphosphate + ATP = a ribonucleoside 5'-triphosphate + ADP. Functionally, major role in the synthesis of nucleoside triphosphates other than ATP. The ATP gamma phosphate is transferred to the NDP beta phosphate via a ping-pong mechanism, using a phosphorylated active-site intermediate. The polypeptide is Nucleoside diphosphate kinase (Ralstonia pickettii (strain 12J)).